A 690-amino-acid polypeptide reads, in one-letter code: SWI/SNF-related matrix-associated actin-dependent regulator of chromatin subfamily A-like protein 1 homolog (690 aa).

The tract at residues 30–49 (MQAAANATASTSSAAPPAPP) is disordered. The segment covering 31-44 (QAAANATASTSSAA) has biased composition (low complexity). One can recognise an HARP domain in the interval 92–170 (PTSLIKPTIG…AVKVELEPLP (79 aa)). Positions 209–367 (IFALERDGRI…FTQIRLIDHK (159 aa)) constitute a Helicase ATP-binding domain. 222-229 (DEMGLGKS) contacts ATP. Residues 316–319 (DESH) carry the DESH box motif. Positions 411–428 (RRLKADVLKDLPEKRREV) match the Nuclear localization signal motif. In terms of domain architecture, Helicase C-terminal spans 482–639 (ILENYFYPDA…TFRTADKMHL (158 aa)).

It belongs to the SNF2/RAD54 helicase family. SMARCAL1 subfamily.

The protein resides in the nucleus. The enzyme catalyses ATP + H2O = ADP + phosphate + H(+). Functionally, ATP-dependent annealing helicase that catalyzes the rewinding of the stably unwound DNA. This Caenorhabditis elegans protein is SWI/SNF-related matrix-associated actin-dependent regulator of chromatin subfamily A-like protein 1 homolog.